The following is a 92-amino-acid chain: UPF0250 protein COSY_0496 (92 aa).

Belongs to the UPF0250 family.

This is UPF0250 protein COSY_0496 from Vesicomyosocius okutanii subsp. Calyptogena okutanii (strain HA).